We begin with the raw amino-acid sequence, 745 residues long: Isocitrate dehydrogenase [NADP] 2 (745 aa).

The NADP(+) site is built by Asn87 and Ser89. Residues Ser134, Asn137, Arg141, Arg147, and Lys257 each coordinate D-threo-isocitrate. Residue Asp352 participates in Mg(2+) binding. Residues Tyr422 and Arg550 each coordinate D-threo-isocitrate. Mg(2+) contacts are provided by Asp551 and Asp555. NADP(+) is bound by residues Gly587, Ser588, Ala589, His592, Arg603, Asp605, and Arg652.

Belongs to the monomeric-type IDH family. As to quaternary structure, may form homotrimers. Also forms homotetramers at low salt concentration, which are dissociated into homodimers, but not into monomers, at high salt concentration (1 M). It depends on Mg(2+) as a cofactor.

It carries out the reaction D-threo-isocitrate + NADP(+) = 2-oxoglutarate + CO2 + NADPH. Functionally, catalyzes the oxidative decarboxylation of isocitrate to 2-oxoglutarate and carbon dioxide with the concomitant reduction of NADP(+). Cannot use NAD(+). This Mycobacterium tuberculosis (strain ATCC 25618 / H37Rv) protein is Isocitrate dehydrogenase [NADP] 2.